We begin with the raw amino-acid sequence, 380 residues long: Cytochrome b (380 aa).

4 consecutive transmembrane segments (helical) span residues 33–53 (FGSLLGICLMVQIITGLFLAM), 77–98 (WLIRYMHANGASMFFICLFIHV), 113–133 (WNIGIALFLTTMATAFVGYVL), and 178–198 (FFAFHFILPFIITAFVLVHLL). 2 residues coordinate heme b: His-83 and His-97. Heme b contacts are provided by His-182 and His-196. His-201 contacts a ubiquinone. 4 consecutive transmembrane segments (helical) span residues 226-246 (IKDILGILMLLMVLMILVLFF), 288-308 (LGGVTALILSILILAMFPLIN), 320-340 (ITQAMYWIFIANLFILTWIGG), and 347-367 (FTMIGLISSILYFSIIVMFMF).

Belongs to the cytochrome b family. As to quaternary structure, the cytochrome bc1 complex contains 11 subunits: 3 respiratory subunits (MT-CYB, CYC1 and UQCRFS1), 2 core proteins (UQCRC1 and UQCRC2) and 6 low-molecular weight proteins (UQCRH/QCR6, UQCRB/QCR7, UQCRQ/QCR8, UQCR10/QCR9, UQCR11/QCR10 and a cleavage product of UQCRFS1). This cytochrome bc1 complex then forms a dimer. It depends on heme b as a cofactor.

The protein localises to the mitochondrion inner membrane. Functionally, component of the ubiquinol-cytochrome c reductase complex (complex III or cytochrome b-c1 complex) that is part of the mitochondrial respiratory chain. The b-c1 complex mediates electron transfer from ubiquinol to cytochrome c. Contributes to the generation of a proton gradient across the mitochondrial membrane that is then used for ATP synthesis. This chain is Cytochrome b (MT-CYB), found in Calomys musculinus (Drylands vesper mouse).